The sequence spans 225 residues: Ribosomal RNA small subunit methyltransferase G (225 aa).

S-adenosyl-L-methionine is bound by residues Gly69, 119-120 (AE), and Arg136.

The protein belongs to the methyltransferase superfamily. RNA methyltransferase RsmG family.

It localises to the cytoplasm. Its function is as follows. Specifically methylates the N7 position of a guanine in 16S rRNA. This is Ribosomal RNA small subunit methyltransferase G from Pseudothermotoga lettingae (strain ATCC BAA-301 / DSM 14385 / NBRC 107922 / TMO) (Thermotoga lettingae).